We begin with the raw amino-acid sequence, 525 residues long: Peptide chain release factor 3 (525 aa).

The tr-type G domain occupies 9–276 (AKRRTFAIIS…GFTTYAPEPQ (268 aa)). GTP-binding positions include 18 to 25 (SHPDAGKT), 86 to 90 (DTPGH), and 140 to 143 (NKFD).

Belongs to the TRAFAC class translation factor GTPase superfamily. Classic translation factor GTPase family. PrfC subfamily.

It localises to the cytoplasm. Functionally, increases the formation of ribosomal termination complexes and stimulates activities of RF-1 and RF-2. It binds guanine nucleotides and has strong preference for UGA stop codons. It may interact directly with the ribosome. The stimulation of RF-1 and RF-2 is significantly reduced by GTP and GDP, but not by GMP. In Francisella philomiragia subsp. philomiragia (strain ATCC 25017 / CCUG 19701 / FSC 153 / O#319-036), this protein is Peptide chain release factor 3.